A 413-amino-acid chain; its full sequence is Putative glutamate synthase [NADPH] small chain (413 aa).

Positions 33, 37, 43, and 47 each coordinate [4Fe-4S] cluster.

As to quaternary structure, aggregate of 4 catalytic active heterodimers, consisting of a large and a small subunit. It depends on [4Fe-4S] cluster as a cofactor.

The catalysed reaction is 2 L-glutamate + NADP(+) = L-glutamine + 2-oxoglutarate + NADPH + H(+). The protein operates within amino-acid biosynthesis; L-glutamate biosynthesis via GLT pathway; L-glutamate from 2-oxoglutarate and L-glutamine (NADP(+) route): step 1/1. It participates in energy metabolism; nitrogen metabolism. This chain is Putative glutamate synthase [NADPH] small chain (gltD), found in Cereibacter sphaeroides (Rhodobacter sphaeroides).